The following is a 515-amino-acid chain: Bifunctional purine biosynthesis protein PurH (515 aa).

The MGS-like domain occupies 1-145; it reads MTKRALISVS…KNHASVTVVV (145 aa).

It belongs to the PurH family.

It carries out the reaction (6R)-10-formyltetrahydrofolate + 5-amino-1-(5-phospho-beta-D-ribosyl)imidazole-4-carboxamide = 5-formamido-1-(5-phospho-D-ribosyl)imidazole-4-carboxamide + (6S)-5,6,7,8-tetrahydrofolate. The enzyme catalyses IMP + H2O = 5-formamido-1-(5-phospho-D-ribosyl)imidazole-4-carboxamide. It functions in the pathway purine metabolism; IMP biosynthesis via de novo pathway; 5-formamido-1-(5-phospho-D-ribosyl)imidazole-4-carboxamide from 5-amino-1-(5-phospho-D-ribosyl)imidazole-4-carboxamide (10-formyl THF route): step 1/1. The protein operates within purine metabolism; IMP biosynthesis via de novo pathway; IMP from 5-formamido-1-(5-phospho-D-ribosyl)imidazole-4-carboxamide: step 1/1. This is Bifunctional purine biosynthesis protein PurH from Streptococcus gordonii (strain Challis / ATCC 35105 / BCRC 15272 / CH1 / DL1 / V288).